Here is a 554-residue protein sequence, read N- to C-terminus: Glutamine--tRNA ligase (554 aa).

The short motif at 34–44 is the 'HIGH' region element; the sequence is PEPNGYLHIGH. Residues 35-37 and 41-47 each bind ATP; these read EPN and HIGHAKS. L-glutamine is bound by residues aspartate 67 and tyrosine 212. ATP contacts are provided by residues threonine 231, 261–262, and 269–271; these read RL and MSK. Positions 268 to 272 match the 'KMSKS' region motif; sequence IMSKR.

Belongs to the class-I aminoacyl-tRNA synthetase family. In terms of assembly, monomer.

The protein localises to the cytoplasm. The catalysed reaction is tRNA(Gln) + L-glutamine + ATP = L-glutaminyl-tRNA(Gln) + AMP + diphosphate. In Serratia proteamaculans (strain 568), this protein is Glutamine--tRNA ligase.